The primary structure comprises 337 residues: Dihydroorotate dehydrogenase (quinone) (337 aa).

FMN-binding positions include 62–66 and T86; that span reads AGLDK. K66 contacts substrate. 111-115 contributes to the substrate binding site; sequence NRMGF. FMN contacts are provided by N140 and N173. N173 contacts substrate. Catalysis depends on S176, which acts as the Nucleophile. N178 lines the substrate pocket. FMN contacts are provided by K218 and T246. A substrate-binding site is contributed by 247 to 248; it reads NT. Residues G269, G298, and 319–320 each bind FMN; that span reads YS.

Belongs to the dihydroorotate dehydrogenase family. Type 2 subfamily. As to quaternary structure, monomer. Requires FMN as cofactor.

It localises to the cell membrane. The catalysed reaction is (S)-dihydroorotate + a quinone = orotate + a quinol. Its pathway is pyrimidine metabolism; UMP biosynthesis via de novo pathway; orotate from (S)-dihydroorotate (quinone route): step 1/1. Its function is as follows. Catalyzes the conversion of dihydroorotate to orotate with quinone as electron acceptor. In Wigglesworthia glossinidia brevipalpis, this protein is Dihydroorotate dehydrogenase (quinone).